The following is a 251-amino-acid chain: CDP-diacylglycerol pyrophosphatase (251 aa).

Residues 5 to 25 (GYFLLAVIVIVAAAGVGYWKF) form a helical membrane-spanning segment.

The protein belongs to the Cdh family.

Its subcellular location is the cell inner membrane. The enzyme catalyses a CDP-1,2-diacyl-sn-glycerol + H2O = a 1,2-diacyl-sn-glycero-3-phosphate + CMP + 2 H(+). Its pathway is phospholipid metabolism; CDP-diacylglycerol degradation; phosphatidate from CDP-diacylglycerol: step 1/1. The polypeptide is CDP-diacylglycerol pyrophosphatase (Salmonella enteritidis PT4 (strain P125109)).